The following is a 758-amino-acid chain: 5-methyltetrahydropteroyltriglutamate--homocysteine methyltransferase (758 aa).

Residues 16 to 19 (RELK) and Lys-112 each bind 5-methyltetrahydropteroyltri-L-glutamate. L-homocysteine is bound by residues 433-435 (IGS) and Glu-486. L-methionine-binding positions include 433–435 (IGS) and Glu-486. 5-methyltetrahydropteroyltri-L-glutamate-binding positions include 517 to 518 (RC) and Trp-563. Asp-601 lines the L-homocysteine pocket. Asp-601 contacts L-methionine. A 5-methyltetrahydropteroyltri-L-glutamate-binding site is contributed by Glu-607. Zn(2+) contacts are provided by His-643, Cys-645, and Glu-667. His-696 functions as the Proton donor in the catalytic mechanism. Cys-728 contacts Zn(2+).

It belongs to the vitamin-B12 independent methionine synthase family. Zn(2+) is required as a cofactor.

It catalyses the reaction 5-methyltetrahydropteroyltri-L-glutamate + L-homocysteine = tetrahydropteroyltri-L-glutamate + L-methionine. Its pathway is amino-acid biosynthesis; L-methionine biosynthesis via de novo pathway; L-methionine from L-homocysteine (MetE route): step 1/1. Its function is as follows. Catalyzes the transfer of a methyl group from 5-methyltetrahydrofolate to homocysteine resulting in methionine formation. The polypeptide is 5-methyltetrahydropteroyltriglutamate--homocysteine methyltransferase (Neisseria meningitidis serogroup B (strain ATCC BAA-335 / MC58)).